The following is a 153-amino-acid chain: Glucose-6-phosphate 1-dehydrogenase (153 aa).

The NADP(+) site is built by R21 and K120. D-glucose 6-phosphate is bound at residue K120.

This sequence belongs to the glucose-6-phosphate dehydrogenase family.

It localises to the cytoplasm. It is found in the cytosol. The enzyme catalyses D-glucose 6-phosphate + NADP(+) = 6-phospho-D-glucono-1,5-lactone + NADPH + H(+). It functions in the pathway carbohydrate degradation; pentose phosphate pathway; D-ribulose 5-phosphate from D-glucose 6-phosphate (oxidative stage): step 1/3. Functionally, cytosolic glucose-6-phosphate dehydrogenase that catalyzes the first and rate-limiting step of the oxidative branch within the pentose phosphate pathway/shunt, an alternative route to glycolysis for the dissimilation of carbohydrates and a major source of reducing power and metabolic intermediates for fatty acid and nucleic acid biosynthetic processes. This chain is Glucose-6-phosphate 1-dehydrogenase (ZW), found in Hyalophora cecropia (Cecropia moth).